Reading from the N-terminus, the 375-residue chain is Growth/differentiation factor 8 (375 aa).

Residues 1–23 (MQKLQIFVYIYLFMLLVAGPVDL) form the signal peptide. A propeptide spanning residues 24 to 266 (NENSEQKENV…VTDTPKRSRR (243 aa)) is cleaved from the precursor. 2 N-linked (GlcNAc...) asparagine glycosylation sites follow: N48 and N71. Cystine bridges form between C272/C282, C281/C340, C309/C372, and C313/C374.

Belongs to the TGF-beta family. Homodimer; disulfide-linked. Interacts with WFIKKN2, leading to inhibit its activity. Interacts with FSTL3. Post-translationally, synthesized as large precursor molecule that undergoes proteolytic cleavage to generate an N-terminal propeptide and a disulfide linked C-terminal dimer, which is the biologically active molecule. The circulating form consists of a latent complex of the C-terminal dimer and other proteins, including its propeptide, which maintain the C-terminal dimer in a latent, inactive state. Ligand activation requires additional cleavage of the prodomain by a tolloid-like metalloproteinase.

It is found in the secreted. Functionally, acts specifically as a negative regulator of skeletal muscle growth. This chain is Growth/differentiation factor 8 (MSTN), found in Ovis aries (Sheep).